Here is a 399-residue protein sequence, read N- to C-terminus: CCA-adding enzyme (399 aa).

The ATP site is built by Gly32 and Arg35. CTP contacts are provided by Gly32 and Arg35. The Mg(2+) site is built by Asp45 and Asp47. ATP-binding residues include Arg116, Asp159, Arg162, Arg165, and Arg168. Positions 116, 159, 162, 165, and 168 each coordinate CTP.

This sequence belongs to the tRNA nucleotidyltransferase/poly(A) polymerase family. Bacterial CCA-adding enzyme type 3 subfamily. As to quaternary structure, homodimer. Requires Mg(2+) as cofactor.

It carries out the reaction a tRNA precursor + 2 CTP + ATP = a tRNA with a 3' CCA end + 3 diphosphate. The catalysed reaction is a tRNA with a 3' CCA end + 2 CTP + ATP = a tRNA with a 3' CCACCA end + 3 diphosphate. Catalyzes the addition and repair of the essential 3'-terminal CCA sequence in tRNAs without using a nucleic acid template. Adds these three nucleotides in the order of C, C, and A to the tRNA nucleotide-73, using CTP and ATP as substrates and producing inorganic pyrophosphate. tRNA 3'-terminal CCA addition is required both for tRNA processing and repair. Also involved in tRNA surveillance by mediating tandem CCA addition to generate a CCACCA at the 3' terminus of unstable tRNAs. While stable tRNAs receive only 3'-terminal CCA, unstable tRNAs are marked with CCACCA and rapidly degraded. The protein is CCA-adding enzyme of Streptococcus sanguinis (strain SK36).